We begin with the raw amino-acid sequence, 1822 residues long: Signal-induced proliferation-associated 1-like protein 1 (1822 aa).

2 disordered regions span residues 1–30 (MTSL…PKVH) and 47–125 (GSSV…VSLN). Positions 84 to 94 (PPRKENVKESS) are enriched in basic and acidic residues. Over residues 95–125 (RSSQEIETSSCLESLSSKGSPVSQGSSVSLN) the composition is skewed to low complexity. Phosphoserine occurs at positions 162, 187, 193, 208, 255, and 288. Residues 277-297 (EREKPLKRRSKSETGDSSIFR) are disordered. Positions 638–855 (FMKLDEQGLN…RTRQEYLKDL (218 aa)) constitute a Rap-GAP domain. A PDZ domain is found at 992-1068 (EMTLRRNGLG…VKVVIIPPHD (77 aa)). Phosphoserine occurs at positions 1117, 1126, 1155, 1166, 1188, 1209, and 1220. A disordered region spans residues 1134–1165 (AGKGDGKMPLPERAANIPRSISSDGRPLERRL). The disordered stretch occupies residues 1183–1252 (SQCRNSPSNL…WQRSEDSLAD (70 aa)). Residues 1188–1198 (SPSNLSSSSET) show a composition bias toward low complexity. The span at 1225–1244 (DRQNTQSDIGGSGKSTPSWQ) shows a compositional bias: polar residues. Phosphoserine is present on residues Ser1273 and Ser1288. The interval 1286 to 1324 (HLSPNKQGHSDSHYSSHSSSNTLSSNASSAHSDEKWYDG) is disordered. Residues 1300 to 1315 (SSHSSSNTLSSNASSA) are compositionally biased toward low complexity. Position 1344 is a phosphoserine; by PLK2 (Ser1344). Thr1348 is modified (phosphothreonine; by PLK2). Residues 1358–1367 (TASLGASTSS) show a composition bias toward low complexity. A disordered region spans residues 1358–1382 (TASLGASTSSPRSGPGKEKVAPLWH). Ser1367 is modified (phosphoserine; by CDK5). The residue at position 1384 (Ser1384) is a Phosphoserine. Over residues 1395 to 1407 (LETEGHGMDRKTE) the composition is skewed to basic and acidic residues. The interval 1395–1493 (LETEGHGMDR…SSSGPRTFYP (99 aa)) is disordered. Residues Ser1408, Ser1409, Ser1430, Ser1449, and Ser1451 each carry the phosphoserine modification. Residues 1417-1436 (KSQGGSSPLTRENSTFSIND) show a composition bias toward polar residues. Low complexity-rich tracts occupy residues 1437-1451 (ATSH…HSAS) and 1471-1486 (SSQL…SSSS). A phosphoserine mark is found at Ser1546 and Ser1567. Positions 1567-1595 (SPTPESQKNFKFHGLSSPQSPFPSTPTSR) are disordered. The residue at position 1569 (Thr1569) is a Phosphothreonine. 5 positions are modified to phosphoserine: Ser1572, Ser1583, Ser1586, Ser1603, and Ser1606. Arg1619 carries the post-translational modification Asymmetric dimethylarginine. Phosphoserine is present on residues Ser1621, Ser1665, Ser1668, Ser1726, Ser1729, Ser1746, Ser1747, and Ser1752. The stretch at 1753-1813 (PTLASKVDQL…ASDKLKKFTE (61 aa)) forms a coiled coil.

Interacts (via PDZ domain) with EPHA4 (via PDZ motif); controls neuronal morphology through regulation of the RAP1 (RAP1A or RAP1B) and RAP2 (RAP2A, RAP2B or RAP2C) GTPases. Interacts with DLG4, PDLIM5, PDLIM7 and LZTS3. Interacts with the actin cytoskeleton. Post-translationally, ubiquitinated and degraded by the SCF(BTRC) following phosphorylation by PLK2. Phosphorylated at Ser-1367 by CDK5, creating a docking site for the POLO box domains of PLK2. Subsequently, PLK2 binds and phosphorylates SIPA1L1, leading to ubiquitination and degradation by the proteasome. Detected in brain (at protein level).

The protein resides in the cytoplasm. It localises to the cytoskeleton. Its subcellular location is the postsynaptic density. The protein localises to the synapse. It is found in the synaptosome. Functionally, stimulates the GTPase activity of RAP2A. Promotes reorganization of the actin cytoskeleton and recruits DLG4 to F-actin. Contributes to the regulation of dendritic spine morphogenesis. The polypeptide is Signal-induced proliferation-associated 1-like protein 1 (Sipa1l1) (Rattus norvegicus (Rat)).